Consider the following 229-residue polypeptide: MRLNIAIFFGALFGALGVLLFLVAFGSDYWLLATEVGRCSGEKNIENVTFHHEGFFWRCWFNGIVEENDSNIWKFWYTNQPPSKNCTHAYLSPYPFMRGEHNSTSYDSAVIYRGFWAVLMLLGVVAVVIASFLIICAAPFASHFLYKAGGGSYIAAGILFSLVVMLYVIWVQAVADMESYRNMKMKDCLDFTPSVLYGWSFFLAPAGIFFSLLAGLLFLVVGWHIQIHH.

The signal sequence occupies residues 1-26 (MRLNIAIFFGALFGALGVLLFLVAFG). Residues 27-114 (SDYWLLATEV…SYDSAVIYRG (88 aa)) lie on the Extracellular side of the membrane. A glycan (N-linked (GlcNAc...) asparagine) is linked at Asn47. The interaction with ITGB1 stretch occupies residues 49–59 (TFHHEGFFWRC). Asn102 carries an N-linked (GlcNAc...) asparagine glycan. Residues 115–135 (FWAVLMLLGVVAVVIASFLII) form a helical membrane-spanning segment. Residues 136 to 153 (CAAPFASHFLYKAGGGSY) lie on the Cytoplasmic side of the membrane. Residues 154–174 (IAAGILFSLVVMLYVIWVQAV) form a helical membrane-spanning segment. Residues 175-200 (ADMESYRNMKMKDCLDFTPSVLYGWS) are Extracellular-facing. A helical transmembrane segment spans residues 201 to 221 (FFLAPAGIFFSLLAGLLFLVV). Residues 222-229 (GWHIQIHH) are Cytoplasmic-facing.

Belongs to the TMEM182 family. As to quaternary structure, interacts with ITGB1.

It is found in the cell membrane. Functionally, negatively regulates myogenesis and skeletal muscle regeneration via its association with ITGB1. Modulates ITGB1 activation by decreasing ITGB1-LAMB1 interaction and inhibiting ITGB1-mediated intracellular signaling during myogenesis. This chain is Transmembrane protein 182 (TMEM182), found in Homo sapiens (Human).